Consider the following 216-residue polypeptide: Imidazole glycerol phosphate synthase subunit HisH (216 aa).

The Glutamine amidotransferase type-1 domain maps to 2 to 216; sequence RVAIIDYGSG…LITNFLRWRP (215 aa). Cys88 serves as the catalytic Nucleophile. Residues His196 and Glu198 contribute to the active site.

In terms of assembly, heterodimer of HisH and HisF.

The protein localises to the cytoplasm. The catalysed reaction is 5-[(5-phospho-1-deoxy-D-ribulos-1-ylimino)methylamino]-1-(5-phospho-beta-D-ribosyl)imidazole-4-carboxamide + L-glutamine = D-erythro-1-(imidazol-4-yl)glycerol 3-phosphate + 5-amino-1-(5-phospho-beta-D-ribosyl)imidazole-4-carboxamide + L-glutamate + H(+). The enzyme catalyses L-glutamine + H2O = L-glutamate + NH4(+). The protein operates within amino-acid biosynthesis; L-histidine biosynthesis; L-histidine from 5-phospho-alpha-D-ribose 1-diphosphate: step 5/9. IGPS catalyzes the conversion of PRFAR and glutamine to IGP, AICAR and glutamate. The HisH subunit catalyzes the hydrolysis of glutamine to glutamate and ammonia as part of the synthesis of IGP and AICAR. The resulting ammonia molecule is channeled to the active site of HisF. This chain is Imidazole glycerol phosphate synthase subunit HisH, found in Mesorhizobium japonicum (strain LMG 29417 / CECT 9101 / MAFF 303099) (Mesorhizobium loti (strain MAFF 303099)).